A 183-amino-acid polypeptide reads, in one-letter code: MKLIVGLGNPGFEYEHTRHNIGFKIIDKLLDVLNLELNKSQFNGLYVKHDDFIIAKPLTYMNLSGNFIRQLVNFYKIQIDDILVIHDELAFNLGVVRLKQNGSANGQKGVANIISQLGTQNFKRLRVGIKNEDLKNIASFVLSKFAPNELILLESAIASASVIAYDFLKSNKSFSKLMNEYNQ.

Tyr14 contributes to the tRNA binding site. His19 functions as the Proton acceptor in the catalytic mechanism. Residues Tyr60 and Asn62 each coordinate tRNA.

The protein belongs to the PTH family. Monomer.

It is found in the cytoplasm. It carries out the reaction an N-acyl-L-alpha-aminoacyl-tRNA + H2O = an N-acyl-L-amino acid + a tRNA + H(+). Hydrolyzes ribosome-free peptidyl-tRNAs (with 1 or more amino acids incorporated), which drop off the ribosome during protein synthesis, or as a result of ribosome stalling. Functionally, catalyzes the release of premature peptidyl moieties from peptidyl-tRNA molecules trapped in stalled 50S ribosomal subunits, and thus maintains levels of free tRNAs and 50S ribosomes. The polypeptide is Peptidyl-tRNA hydrolase (Mycoplasmoides gallisepticum (strain R(low / passage 15 / clone 2)) (Mycoplasma gallisepticum)).